A 291-amino-acid chain; its full sequence is Probable cell wall amidase LytH (291 aa).

Residues 1-40 form the signal peptide; it reads MKKIEAWLSKKGLKNKRTLIVVIAFVLFIIFLFLLLNSNS. Residues 41–105 enclose the SH3b domain; that stretch reads EDSGNITITE…WIAGWHTNLD (65 aa). Residues 118 to 140 form a disordered region; that stretch reads QGKTIVLDPGHGGSDQGASSNTK. In terms of domain architecture, MurNAc-LAA spans 122–286; the sequence is IVLDPGHGGS…LEQAIVDGLK (165 aa).

This sequence belongs to the N-acetylmuramoyl-L-alanine amidase 3 family.

It localises to the secreted. Its function is as follows. Probably involved in cell-wall metabolism. In Staphylococcus aureus (strain USA300), this protein is Probable cell wall amidase LytH (lytH).